Consider the following 452-residue polypeptide: MFKKVLIANRGEIAVRIIRTCQKLNIRTVAIYSEADVDSLHVKHADEAFLIGKPPVAESYLKVDTILEVAKQAGVDAIHPGYGLLSENARFARACVEAGISFIGPSPEVIERMGSKIAARTAMQTAGVPVIPGSDVALADEEEAVHLARKFGYPVMLKASAGGGGIGMQLVRNDEEMRKAFAGNQKRATSFFGDGTMFLEKAVENPRHIEVQIAADHHGHVVHLWERDCSIQRRHQKVVEEAPSPFVDEALREKIGQLAVKAAKAIDYRNLGTVECLVDGEKNIYFLEMNTRLQVEHPVTEEITGIDLVEWQLLIAAGEQLPYAQHEIPLQGHAIEVRIYAEDPVTFFPSPGMIKRFTLPEGEGIRHEYAISEGYKVTPFYDPMVAKLIVSADTRGEAIQRLGRALKQYEIEGIKTNIPMLKQVINHPVFQAGEATTAFVTNHLKVKTGRNP.

Positions 1–445 (MFKKVLIANR…TTAFVTNHLK (445 aa)) constitute a Biotin carboxylation domain. ATP contacts are provided by residues Lys116, Lys158, 164–165 (GG), 200–203 (EKAV), His208, and His235. The region spanning 120 to 317 (RTAMQTAGVP…LVEWQLLIAA (198 aa)) is the ATP-grasp domain. Position 237 (Lys237) interacts with hydrogencarbonate. ATP contacts are provided by Glu275 and Glu288. 3 residues coordinate Mg(2+): Glu275, Glu288, and Asn290. The Mn(2+) site is built by Glu275, Glu288, and Asn290. Hydrogencarbonate-binding residues include Arg292, Val295, and Arg338. Arg292 is a catalytic residue. Arg338 is a binding site for biotin.

In terms of assembly, acetyl-CoA carboxylase is a heterohexamer of biotin carboxyl carrier protein, biotin carboxylase and the two subunits of carboxyl transferase in a 2:2 complex. Requires Mg(2+) as cofactor. Mn(2+) is required as a cofactor.

It catalyses the reaction N(6)-biotinyl-L-lysyl-[protein] + hydrogencarbonate + ATP = N(6)-carboxybiotinyl-L-lysyl-[protein] + ADP + phosphate + H(+). It functions in the pathway lipid metabolism; malonyl-CoA biosynthesis; malonyl-CoA from acetyl-CoA: step 1/1. Its function is as follows. This protein is a component of the acetyl coenzyme A carboxylase complex; first, biotin carboxylase catalyzes the carboxylation of the carrier protein and then the transcarboxylase transfers the carboxyl group to form malonyl-CoA. This Halalkalibacterium halodurans (strain ATCC BAA-125 / DSM 18197 / FERM 7344 / JCM 9153 / C-125) (Bacillus halodurans) protein is Biotin carboxylase (accC).